Here is a 251-residue protein sequence, read N- to C-terminus: Capsid protein (251 aa).

The Bipartite nuclear localization signal signature appears at 3–20 (KRDAPWRLTAGTAKISRT). The Nuclear localization signal signature appears at 35–49 (RASAWVNRPMYRKPR). The segment at 63–80 (CEGPCKVQSFEQRHDVSH) is a zinc-finger region. A Nuclear export signal motif is present at residues 96–117 (ITHRVGKRFCVKSVYILGKIWM). The Bipartite nuclear localization signal motif lies at 195–242 (RRFWKVNNHVVYNHQEAGKYENHTENALLLYMACTHASNPVYATLKIR).

It belongs to the geminiviridae capsid protein family. In terms of assembly, homomultimer. Binds to single-stranded and double-stranded viral DNA. Interacts (via nuclear localization signals) with host importin alpha-1a.

It is found in the virion. The protein localises to the host nucleus. Its function is as follows. Encapsidates the viral DNA into characteristic twinned ('geminate') particles. Binds the genomic viral ssDNA and shuttles it into and out of the cell nucleus. The CP of bipartite geminiviruses is not required for cell-to-cell or systemic movement. This Capsicum annuum (Capsicum pepper) protein is Capsid protein.